The primary structure comprises 362 residues: Histidine biosynthesis bifunctional protein HisB (362 aa).

Residues 1–173 (MQPTLFIDRD…TVTNCGKRPP (173 aa)) form a histidinol-phosphatase region. Catalysis depends on aspartate 8, which acts as the Nucleophile. Mg(2+) is bound by residues aspartate 8 and aspartate 10. The active-site Proton donor is the aspartate 10. Positions 91, 93, 99, and 101 each coordinate Zn(2+). Position 128 (aspartate 128) interacts with Mg(2+). The interval 174–362 (RFAEVIRQTK…NEMPSSKGVL (189 aa)) is imidazoleglycerol-phosphate dehydratase.

The protein in the N-terminal section; belongs to the histidinol-phosphatase family. It in the C-terminal section; belongs to the imidazoleglycerol-phosphate dehydratase family. Mg(2+) is required as a cofactor. The cofactor is Zn(2+).

The protein localises to the cytoplasm. It catalyses the reaction D-erythro-1-(imidazol-4-yl)glycerol 3-phosphate = 3-(imidazol-4-yl)-2-oxopropyl phosphate + H2O. The catalysed reaction is L-histidinol phosphate + H2O = L-histidinol + phosphate. Its pathway is amino-acid biosynthesis; L-histidine biosynthesis; L-histidine from 5-phospho-alpha-D-ribose 1-diphosphate: step 6/9. The protein operates within amino-acid biosynthesis; L-histidine biosynthesis; L-histidine from 5-phospho-alpha-D-ribose 1-diphosphate: step 8/9. The sequence is that of Histidine biosynthesis bifunctional protein HisB from Haemophilus influenzae (strain 86-028NP).